A 48-amino-acid polypeptide reads, in one-letter code: Small, acid-soluble spore protein O (48 aa).

The interval 1-48 (MAKRKANHVINGMNNAKRQGNGAGYIENDQHILTEAERQNNKKRKTNQ) is disordered. The segment covering 28–40 (NDQHILTEAERQN) has biased composition (basic and acidic residues).

Belongs to the SspO family.

The protein localises to the spore core. This is Small, acid-soluble spore protein O from Bacillus licheniformis (strain ATCC 14580 / DSM 13 / JCM 2505 / CCUG 7422 / NBRC 12200 / NCIMB 9375 / NCTC 10341 / NRRL NRS-1264 / Gibson 46).